A 335-amino-acid polypeptide reads, in one-letter code: Dihydroorotate dehydrogenase (quinone) (335 aa).

FMN-binding positions include 59–63 (AGLDK) and T83. K63 contacts substrate. 108-112 (NRMGF) contacts substrate. 2 residues coordinate FMN: N136 and N169. N169 lines the substrate pocket. S172 acts as the Nucleophile in catalysis. N174 lines the substrate pocket. 2 residues coordinate FMN: K214 and T242. Position 243–244 (243–244 (NT)) interacts with substrate. FMN is bound by residues G265, G294, and 315-316 (YS).

This sequence belongs to the dihydroorotate dehydrogenase family. Type 2 subfamily. As to quaternary structure, monomer. FMN is required as a cofactor.

It is found in the cell membrane. The enzyme catalyses (S)-dihydroorotate + a quinone = orotate + a quinol. Its pathway is pyrimidine metabolism; UMP biosynthesis via de novo pathway; orotate from (S)-dihydroorotate (quinone route): step 1/1. Catalyzes the conversion of dihydroorotate to orotate with quinone as electron acceptor. The protein is Dihydroorotate dehydrogenase (quinone) of Neisseria meningitidis serogroup A / serotype 4A (strain DSM 15465 / Z2491).